The sequence spans 648 residues: Threonine--tRNA ligase (648 aa).

The TGS domain occupies 1–61 (MITITFPDGA…EEDGSIEIIT (61 aa)). Positions 242 to 540 (DHRKLGKELD…LIETYKGAFP (299 aa)) are catalytic. Zn(2+) contacts are provided by Cys336, His387, and His517.

The protein belongs to the class-II aminoacyl-tRNA synthetase family. Homodimer. Zn(2+) is required as a cofactor.

The protein localises to the cytoplasm. The enzyme catalyses tRNA(Thr) + L-threonine + ATP = L-threonyl-tRNA(Thr) + AMP + diphosphate + H(+). In terms of biological role, catalyzes the attachment of threonine to tRNA(Thr) in a two-step reaction: L-threonine is first activated by ATP to form Thr-AMP and then transferred to the acceptor end of tRNA(Thr). Also edits incorrectly charged L-seryl-tRNA(Thr). The polypeptide is Threonine--tRNA ligase (Streptococcus equi subsp. zooepidemicus (strain H70)).